We begin with the raw amino-acid sequence, 579 residues long: YTH domain-containing family protein 2 (579 aa).

Positions M1–N45 are disordered. The residue at position 2 (S2) is an N-acetylserine. A phosphoserine mark is found at S2, S4, S5, S22, S39, and S196. The tract at residues S2–E384 is localization to mRNA processing bodies (P-bodies). The disordered stretch occupies residues A247–P387. Over residues A291–P316 the composition is skewed to polar residues. Residues A337–T349 are compositionally biased toward low complexity. The residue at position 359 (S359) is a Phosphoserine. Residues S359–V371 are compositionally biased toward gly residues. Positions G372–S383 are enriched in polar residues. The segment at P385 to K579 is interaction with m6A-containing mRNAs. Position 394 is a phosphoserine (S394). The YTH domain occupies G410–I544. Residues K416 to Y418, D422, W432 to C433, N462, W486, and W491 contribute to the RNA site.

This sequence belongs to the YTHDF family. YTHDF2 subfamily. As to quaternary structure, interacts with CNOT1; interaction is direct and promotes recruitment of the CCR4-NOT complex. Interacts with YTHDF3. Interacts with RIDA/HRSP12; interaction leads to recruitment of the ribonuclease P/MRP complex. In terms of processing, ubiquitinated by the SCF(SKP2) complex, leading to its degradation. In terms of tissue distribution, highly expressed in induced pluripotent stem cells (iPSCs) and down-regulated during neural differentiation.

It is found in the cytoplasm. The protein localises to the cytosol. It localises to the P-body. The protein resides in the stress granule. Its subcellular location is the nucleus. Functionally, specifically recognizes and binds N6-methyladenosine (m6A)-containing RNAs, and regulates their stability. M6A is a modification present at internal sites of mRNAs and some non-coding RNAs and plays a role in mRNA stability and processing. Acts as a regulator of mRNA stability by promoting degradation of m6A-containing mRNAs via interaction with the CCR4-NOT and ribonuclease P/MRP complexes, depending on the context. The YTHDF paralogs (YTHDF1, YTHDF2 and YTHDF3) share m6A-containing mRNAs targets and act redundantly to mediate mRNA degradation and cellular differentiation. M6A-containing mRNAs containing a binding site for RIDA/HRSP12 (5'-GGUUC-3') are preferentially degraded by endoribonucleolytic cleavage: cooperative binding of RIDA/HRSP12 and YTHDF2 to transcripts leads to recruitment of the ribonuclease P/MRP complex. Other m6A-containing mRNAs undergo deadenylation via direct interaction between YTHDF2 and CNOT1, leading to recruitment of the CCR4-NOT and subsequent deadenylation of m6A-containing mRNAs. Required maternally to regulate oocyte maturation: probably acts by binding to m6A-containing mRNAs, thereby regulating maternal transcript dosage during oocyte maturation, which is essential for the competence of oocytes to sustain early zygotic development. Also required during spermatogenesis: regulates spermagonial adhesion by promoting degradation of m6A-containing transcripts coding for matrix metallopeptidases. Also involved in hematopoietic stem cells specification by binding to m6A-containing mRNAs, leading to promote their degradation. Also acts as a regulator of neural development by promoting m6A-dependent degradation of neural development-related mRNA targets. Inhibits neural specification of induced pluripotent stem cells by binding to methylated neural-specific mRNAs and promoting their degradation, thereby restraining neural differentiation. Regulates circadian regulation of hepatic lipid metabolism: acts by promoting m6A-dependent degradation of PPARA transcripts. Regulates the innate immune response to infection by inhibiting the type I interferon response: acts by binding to m6A-containing IFNB transcripts and promoting their degradation. May also act as a promoter of cap-independent mRNA translation following heat shock stress: upon stress, relocalizes to the nucleus and specifically binds mRNAs with some m6A methylation mark at their 5'-UTR, protecting demethylation of mRNAs by FTO, thereby promoting cap-independent mRNA translation. Regulates mitotic entry by promoting the phase-specific m6A-dependent degradation of WEE1 transcripts. Promotes formation of phase-separated membraneless compartments, such as P-bodies or stress granules, by undergoing liquid-liquid phase separation upon binding to mRNAs containing multiple m6A-modified residues: polymethylated mRNAs act as a multivalent scaffold for the binding of YTHDF proteins, juxtaposing their disordered regions and thereby leading to phase separation. The resulting mRNA-YTHDF complexes then partition into different endogenous phase-separated membraneless compartments, such as P-bodies, stress granules or neuronal RNA granules. May also recognize and bind RNAs modified by C5-methylcytosine (m5C) and act as a regulator of rRNA processing. In terms of biological role, (Microbial infection) Promotes viral gene expression and replication of polyomavirus SV40: acts by binding to N6-methyladenosine (m6A)-containing viral RNAs. (Microbial infection) Promotes viral gene expression and virion production of kaposis sarcoma-associated herpesvirus (KSHV) at some stage of the KSHV life cycle (in iSLK.219 and iSLK.BAC16 cells). Acts by binding to N6-methyladenosine (m6A)-containing viral RNAs. This chain is YTH domain-containing family protein 2, found in Homo sapiens (Human).